The chain runs to 25 residues: Mu-conotoxin CnIIIB (25 aa).

Residue Gln-1 is modified to Pyrrolidone carboxylic acid; partial. 3 disulfide bridges follow: Cys-3-Cys-15, Cys-4-Cys-21, and Cys-10-Cys-22.

Belongs to the conotoxin M superfamily. Expressed by the venom duct.

It localises to the secreted. Functionally, mu-conotoxins block voltage-gated sodium channels (Nav). This synthetic toxin blocks slightly but irreversibly tetrodotoxin-resistant VGSCs. The chain is Mu-conotoxin CnIIIB from Conus consors (Singed cone).